The sequence spans 403 residues: Argininosuccinate synthase (403 aa).

Residue 9–17 (AYSGGLDTS) coordinates ATP. Tyrosine 86 serves as a coordination point for L-citrulline. Glycine 116 contacts ATP. Residues threonine 118, asparagine 122, and aspartate 123 each coordinate L-aspartate. L-citrulline is bound at residue asparagine 122. Residues arginine 126, serine 174, serine 183, glutamate 259, and tyrosine 271 each contribute to the L-citrulline site.

It belongs to the argininosuccinate synthase family. Type 1 subfamily. Homotetramer.

The protein localises to the cytoplasm. It catalyses the reaction L-citrulline + L-aspartate + ATP = 2-(N(omega)-L-arginino)succinate + AMP + diphosphate + H(+). It functions in the pathway amino-acid biosynthesis; L-arginine biosynthesis; L-arginine from L-ornithine and carbamoyl phosphate: step 2/3. This Shouchella clausii (strain KSM-K16) (Alkalihalobacillus clausii) protein is Argininosuccinate synthase.